The chain runs to 353 residues: MKFIDEATIKVYAGDGGNGVATFRREKYEAMGGPNGGDGGRGGSIYMIADRNINTLVDYRYTRVFRAQRGENGRGSDQYGASGEDMVLRVPVGTVVSDKATGQVLTDLAEHGQKVMVAKGGKGGLGNIHFKSSVNRAPRQCTKGDPGEEFELYLELKVLADVGLLGMPNAGKSTFIRSVSAAKPKVADYPFTTLHPNLGVVRVDANRSFVIADVPGLIEGAAEGAGLGHQFLRHLSRTRLLLHLVDLAPFDESVDPVREALAITEELRKYDEALYNKPRWLVLNKVDMLEDSEQKVAEFVQRLGWQGRYFAISALAGIGCRELTYAIMEHVEEASRVEHEAAENTGAASMSGD.

Positions 1–159 constitute an Obg domain; sequence MKFIDEATIK…FELYLELKVL (159 aa). In terms of domain architecture, OBG-type G spans 160–332; that stretch reads ADVGLLGMPN…LTYAIMEHVE (173 aa). Residues 166 to 173, 191 to 195, 213 to 216, 284 to 287, and 313 to 315 each bind GTP; these read GMPNAGKS, FTTLH, DVPG, NKVD, and SAL. Mg(2+) is bound by residues S173 and T193.

This sequence belongs to the TRAFAC class OBG-HflX-like GTPase superfamily. OBG GTPase family. In terms of assembly, monomer. Mg(2+) serves as cofactor.

It localises to the cytoplasm. Functionally, an essential GTPase which binds GTP, GDP and possibly (p)ppGpp with moderate affinity, with high nucleotide exchange rates and a fairly low GTP hydrolysis rate. Plays a role in control of the cell cycle, stress response, ribosome biogenesis and in those bacteria that undergo differentiation, in morphogenesis control. This chain is GTPase Obg, found in Methylobacillus flagellatus (strain ATCC 51484 / DSM 6875 / VKM B-1610 / KT).